Consider the following 199-residue polypeptide: 3-hexulose-6-phosphate isomerase (199 aa).

Positions Leu-44–Val-186 constitute an SIS domain. Residues Ser-62 and Ser-101 to Thr-106 each bind substrate. Glu-166 serves as the catalytic Proton acceptor.

This sequence belongs to the SIS family. PHI subfamily.

It catalyses the reaction D-arabino-hex-3-ulose 6-phosphate = beta-D-fructose 6-phosphate. The protein operates within one-carbon metabolism; formaldehyde assimilation via RuMP pathway; D-fructose 6-phosphate from D-ribulose 5-phosphate and formaldehyde: step 2/2. Catalyzes the isomerization between 3-hexulose 6-phosphate and fructose 6-phosphate. The protein is 3-hexulose-6-phosphate isomerase (rmpB) of Mycobacterium gastri.